The chain runs to 113 residues: UPF0102 protein Dgeo_1894 (113 aa).

The protein belongs to the UPF0102 family.

This chain is UPF0102 protein Dgeo_1894, found in Deinococcus geothermalis (strain DSM 11300 / CIP 105573 / AG-3a).